The primary structure comprises 201 residues: Recombination protein RecR (201 aa).

The C4-type zinc finger occupies 57 to 72; sequence CADCRTFTEQEVCNIC. The Toprim domain occupies 81–176; that stretch reads GQICVVESPA…EASRIAHGVP (96 aa).

The protein belongs to the RecR family.

Functionally, may play a role in DNA repair. It seems to be involved in an RecBC-independent recombinational process of DNA repair. It may act with RecF and RecO. The polypeptide is Recombination protein RecR (Escherichia coli O6:K15:H31 (strain 536 / UPEC)).